The sequence spans 477 residues: Cysteine--tRNA ligase (477 aa).

C29 is a binding site for Zn(2+). Positions 31–41 (PTVYNYFHVGN) match the 'HIGH' region motif. Residues C209, H234, and E238 each contribute to the Zn(2+) site. Positions 267-271 (KMSKS) match the 'KMSKS' region motif. K270 contributes to the ATP binding site.

This sequence belongs to the class-I aminoacyl-tRNA synthetase family. In terms of assembly, monomer. The cofactor is Zn(2+).

The protein resides in the cytoplasm. The enzyme catalyses tRNA(Cys) + L-cysteine + ATP = L-cysteinyl-tRNA(Cys) + AMP + diphosphate. The protein is Cysteine--tRNA ligase of Desulfitobacterium hafniense (strain DSM 10664 / DCB-2).